A 140-amino-acid polypeptide reads, in one-letter code: Arsenate reductase (140 aa).

Cys-11 functions as the Nucleophile; cysteine thioarsenate intermediate in the catalytic mechanism.

The protein belongs to the ArsC family.

It catalyses the reaction [glutaredoxin]-dithiol + arsenate + glutathione + H(+) = glutathionyl-S-S-[glutaredoxin] + arsenite + H2O. Functionally, involved in resistance to arsenate. Catalyzes the reduction of arsenate [As(V)] to arsenite [As(III)]. The resulting arsenite is then extruded from the cell via the aquaglyceroporin AqpS. Does not display antimonate reductase activity. The chain is Arsenate reductase from Rhizobium meliloti (strain 1021) (Ensifer meliloti).